A 1125-amino-acid polypeptide reads, in one-letter code: MELSEPKQRFESLLSLFEDVANKRYSGDFSVKKNINAPQVPPRSYSLFNVTGGNVSSYNNQQQQQNNNNNNNNNNNNNNNNNNNNNNNNNNSGEISSNNSTPSILFSPTPTSTAPPAPPQPTTPPNTGFHNRPLSININQQPIGGVNNNNNNNNKDSPSNKPLRLSGSPPTASINGNQIEQLQRELRNEKEAHQQTKYLLNSFADENKKLSNDCQLWRAKYFKLLTKNTKLKVIFDHFQSIMNESDSVPGEGSLVHSTSYNSSSSSSSGGGGNITPRKLSLAGGGKFDDAPQSASALLKIHHQRNQSTGSAFSNTIYNGEEKTRDTISYNERPKRQTVGSSTFFPPPPSRATSTSSIQVNSDPQEIEQLTEEQYLEMLEKRRQVSLQILQTEKEYAFYLNIIVEEFLQPLKNESNLSNNPFISKAQVKQLFGDTEVILGSSKLLAEDLENVLLDGTSNPIGLGDCFLKICDYFKLYASYVKNYYTSISVLNKLKEESHKFQAFIQEKEQILLDSNFTDLGALLVLPVSRIGQYTSMINYLFSLTPQSHPDYEPFKKAVIKMKSTVDYVKEKIRDNDSQNKVRIIQNQMTGKFENLNLPHRRYVREGMLTESGKGSNSNQYYCFLFNDIFVLSTPIKKSNQFSFKKKISLSEAEVTMISDPEDRPIFQISIQNIDSQQDNSPNMLSLNGIQNAINNMTNNDSKSKNNNNNNSNGNNNNNNINSNSNSNNNSVIDIKSSGVLINNGGGSGFISNNNGITNVNSNNNNNNNINSNNNINGNNNNGNNSVNYSNGEDNNDRECFTFIADSNRDREDWIQAIHANIISSKKRNETRKPEDIEKGGIDFSVSDIKLCEQIGSGGSGCTVHRCTVDGFTCAVKVLKLKNTSPFLVEQFISEITIMVKLSHQNIAKYLGHRLSGNQLWLFMEFYPHSLKDVITKRTSPFPATEVIWMALEIAKGLEFLHTQKNPIIHRDLKPGNIMCSLDDKGRVCSIRVCDFDTSKELGNGVTLKTCIGTPCYMAAEVLNVADGGNSGYSLKADIWSFAMLCFEIISLLPPYHQFQHLQSIEMIINGTCPPLPTDLIQPKLLQPLIELLVTCIDLNPNHRPNASQLVQKLTKMLKNTGMMTE.

Disordered regions lie at residues 50 to 175 (VTGG…ASIN), 247 to 287 (SVPG…GGKF), and 322 to 362 (KTRD…VNSD). Positions 59–91 (NNQQQQQNNNNNNNNNNNNNNNNNNNNNNNNNN) are enriched in low complexity. The span at 92 to 106 (SGEISSNNSTPSILF) shows a compositional bias: polar residues. Over residues 113–124 (TAPPAPPQPTTP) the composition is skewed to pro residues. Low complexity predominate over residues 137 to 161 (NINQQPIGGVNNNNNNNNKDSPSNK). Positions 380–571 (KRRQVSLQIL…KSTVDYVKEK (192 aa)) constitute a DH domain. A PH domain is found at 601-822 (RYVREGMLTE…WIQAIHANII (222 aa)). Disordered stretches follow at residues 693–729 (INNMTNNDSKSKNNNNNNSNGNNNNNNINSNSNSNNN) and 761–791 (SNNNNNNNINSNNNINGNNNNGNNSVNYSNG). A compositionally biased stretch (low complexity) spans 694–729 (NNMTNNDSKSKNNNNNNSNGNNNNNNINSNSNSNNN). The Protein kinase domain maps to 848–1117 (IKLCEQIGSG…QLVQKLTKML (270 aa)). Residues 854 to 862 (IGSGGSGCT) and Lys876 each bind ATP. Asp971 functions as the Proton acceptor in the catalytic mechanism.

This sequence belongs to the protein kinase superfamily. STE Ser/Thr protein kinase family. Mg(2+) is required as a cofactor.

The catalysed reaction is L-seryl-[protein] + ATP = O-phospho-L-seryl-[protein] + ADP + H(+). It carries out the reaction L-threonyl-[protein] + ATP = O-phospho-L-threonyl-[protein] + ADP + H(+). In Dictyostelium discoideum (Social amoeba), this protein is Kinase and exchange factor for Rac B.